The chain runs to 873 residues: Serine/threonine-protein phosphatase 6 regulatory subunit 3 (873 aa).

Disordered regions lie at residues 628–659 (IAFTPESQRRSSSGSTDSEESTDSEEEDGTKQ), 693–715 (AHGTNLDSVGSDVWSTEEPMPAK), 729–755 (LSSTDSLRSNSPVEMETNTEPMDPLSA), 767–787 (PGSVAMEASSDGEEDAENADK), and 840–873 (AEEAPSALQPANSSPEQRTDQRTLLGETSVNGPV). Positions 644–655 (DSEESTDSEEED) are enriched in acidic residues. A compositionally biased stretch (low complexity) spans 729–739 (LSSTDSLRSNS).

The protein belongs to the SAPS family. As to quaternary structure, protein phosphatase 6 (PP6) holoenzyme is proposed to be a heterotrimeric complex formed by the catalytic subunit, a SAPS domain-containing subunit (PP6R) and an ankyrin repeat-domain containing regulatory subunit (ARS).

In terms of biological role, regulatory subunit of protein phosphatase 6 (PP6). May function as a scaffolding PP6 subunit. This chain is Serine/threonine-protein phosphatase 6 regulatory subunit 3 (PPP6R3), found in Gallus gallus (Chicken).